The sequence spans 477 residues: Putative WAS protein family homolog 4 (477 aa).

The segment at 1 to 180 (MSGVMCLKAS…EGLGGLPSNI (180 aa)) is WHD1. Disordered stretches follow at residues 310–420 (QDGV…QGGH) and 434–477 (KGIS…DWES). Over residues 315-327 (TPPPPPPPPPPAP) the composition is skewed to pro residues. Residues 362-477 (QGAPREVVDP…QAEDEDDWES (116 aa)) form a VCA region. Residues 374-396 (GWATLLESIRQAGGIGKAKLRSM) enclose the WH2 domain. A compositionally biased stretch (basic and acidic residues) spans 395 to 411 (SMKERKLEKQQQKEQEQ). Residues 437–449 (SGKGPGAGDGPGG) are compositionally biased toward gly residues.

It belongs to the WASH1 family. As to quaternary structure, interacts (via WHD1 region) with WASHC2C; the interaction is direct.

Its subcellular location is the early endosome membrane. It is found in the recycling endosome membrane. Functionally, may act as a nucleation-promoting factor at the surface of endosomes, where it recruits and activates the Arp2/3 complex to induce actin polymerization, playing a key role in the fission of tubules that serve as transport intermediates during endosome sorting. This Homo sapiens (Human) protein is Putative WAS protein family homolog 4 (WASH4P).